A 296-amino-acid chain; its full sequence is DNA-3-methyladenine glycosylase (296 aa).

At S110 the chain carries Phosphoserine. The active-site Proton acceptor is the D209.

The protein belongs to the alkylbase DNA glycosidase AlkA family.

It is found in the nucleus. The catalysed reaction is Hydrolysis of alkylated DNA, releasing 3-methyladenine, 3-methylguanine, 7-methylguanine and 7-methyladenine.. In terms of biological role, hydrolysis of the deoxyribose N-glycosidic bond to excise 3-methyladenine or 7-methyladenine from the damaged DNA polymer formed by alkylation lesions. The sequence is that of DNA-3-methyladenine glycosylase (MAG1) from Saccharomyces cerevisiae (strain ATCC 204508 / S288c) (Baker's yeast).